Consider the following 144-residue polypeptide: Large ribosomal subunit protein uL15 (144 aa).

A disordered region spans residues 1-57 (MLLNTLSPAAGSKHAPKRLGRGVGSGLGKTGGRGHKGQKSRSGGKVRPGFEGGQMPL). Residues 21–31 (RGVGSGLGKTG) show a composition bias toward gly residues. Basic residues predominate over residues 32–44 (GRGHKGQKSRSGG).

It belongs to the universal ribosomal protein uL15 family. As to quaternary structure, part of the 50S ribosomal subunit.

Its function is as follows. Binds to the 23S rRNA. This is Large ribosomal subunit protein uL15 from Vibrio cholerae serotype O1 (strain ATCC 39541 / Classical Ogawa 395 / O395).